A 381-amino-acid polypeptide reads, in one-letter code: L-lactate dehydrogenase (381 aa).

Residues 1–380 enclose the FMN hydroxy acid dehydrogenase domain; sequence MIISASTDYR…SADSLVRELG (380 aa). Y24 is a binding site for substrate. Residues S106 and Q127 each coordinate FMN. Y129 contacts substrate. Position 155 (T155) interacts with FMN. R164 lines the substrate pocket. K251 provides a ligand contact to FMN. The active-site Proton acceptor is H275. R278 contacts substrate. 306 to 330 is a binding site for FMN; that stretch reads DSGIRTGLDVVRMIALGADSVLLGR.

It belongs to the FMN-dependent alpha-hydroxy acid dehydrogenase family. In terms of assembly, homotetramer. FMN serves as cofactor.

It is found in the cell inner membrane. It carries out the reaction (S)-lactate + A = pyruvate + AH2. Its function is as follows. Catalyzes the conversion of L-lactate to pyruvate. Is coupled to the respiratory chain. This chain is L-lactate dehydrogenase, found in Pseudomonas aeruginosa (strain UCBPP-PA14).